The chain runs to 198 residues: Pyridoxine/pyridoxamine 5'-phosphate oxidase (198 aa).

FMN contacts are provided by residues 47-52 (RMVLVK), 62-63 (FT), R68, K69, and Q91. Residue K52 coordinates substrate. Substrate-binding residues include Y109, R113, and S117. Residues 126–127 (QS) and W171 each bind FMN. 177-179 (RLH) is a binding site for substrate. R181 provides a ligand contact to FMN.

This sequence belongs to the pyridoxamine 5'-phosphate oxidase family. Homodimer. It depends on FMN as a cofactor.

It carries out the reaction pyridoxamine 5'-phosphate + O2 + H2O = pyridoxal 5'-phosphate + H2O2 + NH4(+). It catalyses the reaction pyridoxine 5'-phosphate + O2 = pyridoxal 5'-phosphate + H2O2. The protein operates within cofactor metabolism; pyridoxal 5'-phosphate salvage; pyridoxal 5'-phosphate from pyridoxamine 5'-phosphate: step 1/1. It functions in the pathway cofactor metabolism; pyridoxal 5'-phosphate salvage; pyridoxal 5'-phosphate from pyridoxine 5'-phosphate: step 1/1. Catalyzes the oxidation of either pyridoxine 5'-phosphate (PNP) or pyridoxamine 5'-phosphate (PMP) into pyridoxal 5'-phosphate (PLP). In Anaeromyxobacter dehalogenans (strain 2CP-C), this protein is Pyridoxine/pyridoxamine 5'-phosphate oxidase.